The primary structure comprises 141 residues: Galactose-6-phosphate isomerase subunit LacA 1 (141 aa).

The protein belongs to the LacAB/RpiB family. Heteromultimeric protein consisting of LacA and LacB.

The enzyme catalyses aldehydo-D-galactose 6-phosphate = keto-D-tagatose 6-phosphate. It functions in the pathway carbohydrate metabolism; D-galactose 6-phosphate degradation; D-tagatose 6-phosphate from D-galactose 6-phosphate: step 1/1. This is Galactose-6-phosphate isomerase subunit LacA 1 from Streptococcus pyogenes serotype M3 (strain SSI-1).